Here is a 312-residue protein sequence, read N- to C-terminus: Homoserine O-succinyltransferase (312 aa).

The Acyl-thioester intermediate role is filled by C142. 2 residues coordinate substrate: K163 and S192. H235 (proton acceptor) is an active-site residue. E237 is an active-site residue. R249 serves as a coordination point for substrate.

Belongs to the MetA family.

It localises to the cytoplasm. The enzyme catalyses L-homoserine + succinyl-CoA = O-succinyl-L-homoserine + CoA. The protein operates within amino-acid biosynthesis; L-methionine biosynthesis via de novo pathway; O-succinyl-L-homoserine from L-homoserine: step 1/1. In terms of biological role, transfers a succinyl group from succinyl-CoA to L-homoserine, forming succinyl-L-homoserine. This chain is Homoserine O-succinyltransferase, found in Shewanella halifaxensis (strain HAW-EB4).